A 249-amino-acid polypeptide reads, in one-letter code: Methionine aminopeptidase 2 (249 aa).

A substrate-binding site is contributed by His-76. Asp-94, Asp-105, and His-168 together coordinate a divalent metal cation. Residue His-175 coordinates substrate. A divalent metal cation contacts are provided by Glu-202 and Glu-233.

In terms of assembly, monomer. Requires Co(2+) as cofactor. Zn(2+) serves as cofactor. The cofactor is Mn(2+). It depends on Fe(2+) as a cofactor.

The protein resides in the cytoplasm. The enzyme catalyses Release of N-terminal amino acids, preferentially methionine, from peptides and arylamides.. Functionally, removes the N-terminal methionine from nascent proteins. The N-terminal methionine is often cleaved when the second residue in the primary sequence is small and uncharged (Met-Ala-, Cys, Gly, Pro, Ser, Thr, or Val). Requires deformylation of the N(alpha)-formylated initiator methionine before it can be hydrolyzed. The protein is Methionine aminopeptidase 2 of Bacillus subtilis (strain 168).